The primary structure comprises 69 residues: Large ribosomal subunit protein bL31 (69 aa).

The Zn(2+) site is built by cysteine 17, cysteine 19, cysteine 37, and cysteine 40.

Belongs to the bacterial ribosomal protein bL31 family. Type A subfamily. Part of the 50S ribosomal subunit. It depends on Zn(2+) as a cofactor.

Functionally, binds the 23S rRNA. This Caldanaerobacter subterraneus subsp. tengcongensis (strain DSM 15242 / JCM 11007 / NBRC 100824 / MB4) (Thermoanaerobacter tengcongensis) protein is Large ribosomal subunit protein bL31.